The following is a 37-amino-acid chain: Large ribosomal subunit protein bL36c (37 aa).

Belongs to the bacterial ribosomal protein bL36 family.

Its subcellular location is the plastid. The protein resides in the chloroplast. This chain is Large ribosomal subunit protein bL36c, found in Pinus koraiensis (Korean pine).